The chain runs to 831 residues: DNA polymerase I, thermostable (831 aa).

The 5'-3' exonuclease domain occupies 174–258; sequence RPEQWVDYRA…TDLPLEVDFG (85 aa). A polymerase region spans residues 409–831; the sequence is ERLFQTLKER…LGEDWLSAKE (423 aa).

The protein belongs to the DNA polymerase type-A family.

It catalyses the reaction DNA(n) + a 2'-deoxyribonucleoside 5'-triphosphate = DNA(n+1) + diphosphate. Functionally, in addition to polymerase activity, this DNA polymerase exhibits 5'-3' exonuclease activity. The sequence is that of DNA polymerase I, thermostable (polA) from Thermus thermophilus.